Here is a 160-residue protein sequence, read N- to C-terminus: Large ribosomal subunit protein eL21A (160 aa).

A Glycyl lysine isopeptide (Lys-Gly) (interchain with G-Cter in ubiquitin) cross-link involves residue K32.

This sequence belongs to the eukaryotic ribosomal protein eL21 family. Component of the large ribosomal subunit (LSU). Mature yeast ribosomes consist of a small (40S) and a large (60S) subunit. The 40S small subunit contains 1 molecule of ribosomal RNA (18S rRNA) and 33 different proteins (encoded by 57 genes). The large 60S subunit contains 3 rRNA molecules (25S, 5.8S and 5S rRNA) and 46 different proteins (encoded by 81 genes).

Its subcellular location is the cytoplasm. Component of the ribosome, a large ribonucleoprotein complex responsible for the synthesis of proteins in the cell. The small ribosomal subunit (SSU) binds messenger RNAs (mRNAs) and translates the encoded message by selecting cognate aminoacyl-transfer RNA (tRNA) molecules. The large subunit (LSU) contains the ribosomal catalytic site termed the peptidyl transferase center (PTC), which catalyzes the formation of peptide bonds, thereby polymerizing the amino acids delivered by tRNAs into a polypeptide chain. The nascent polypeptides leave the ribosome through a tunnel in the LSU and interact with protein factors that function in enzymatic processing, targeting, and the membrane insertion of nascent chains at the exit of the ribosomal tunnel. This Saccharomyces cerevisiae (strain ATCC 204508 / S288c) (Baker's yeast) protein is Large ribosomal subunit protein eL21A.